A 1143-amino-acid polypeptide reads, in one-letter code: Disease resistance protein Piks-1 (1143 aa).

Positions 1–190 (MEAAAMAVTA…PLRIMGGEMQ (190 aa)) are structured coiled coil (CC) domain. Positions 189–258 (MQKIVFKIPM…KVGPAMFLEV (70 aa)) constitute an HMA domain. An HMA-like domain region spans residues 191-264 (KIVFKIPMVD…FLEVSQAKED (74 aa)). One can recognise an NB-ARC domain in the interval 282–570 (HEVKTICILG…WIAEGFVSEE (289 aa)). LRR repeat units follow at residues 681–706 (FKRLRVLDLEDNKDIQDSHLQGICEQ), 708–731 (SLRVRYLGLKGTRIRKLPQEMRKL), 732–754 (KHLEILYVGSTRISELPQEIGEL), 756–777 (HLRILDVRNTDITELPLQIREL), 778–800 (QHLHTLDVRNTPISELPPQVGKL), 802–823 (NLKIMCVRSTGVRELPKEIGEL), 824–848 (NHLQTLDVRNTRVRELPWQAGQISQ), 945–968 (MPNLQTLVLRFEALPRQPITINGT), 979–1002 (DSRVPRIAFHEDAMPNLKLLEFKF), and 1004–1027 (AGPASNDAIGITNLKSLQKVVFRC).

The protein belongs to the disease resistance NB-LRR family. In terms of assembly, interacts with AVR-Pik through its N-terminal part containing the HMA-like domain.

Disease resistance (R) protein that specifically recognizes the AVR-Pik effector avirulence protein from M.oryzae. Resistance proteins guard the plant against pathogens that contain an appropriate avirulence protein via an indirect interaction with this avirulence protein. That triggers a defense system including the hypersensitive response, which restricts the pathogen growth. The sequence is that of Disease resistance protein Piks-1 from Oryza sativa subsp. japonica (Rice).